Consider the following 164-residue polypeptide: ATP synthase subunit b (164 aa).

Residues 7-25 (SFWLAVSFIIFVYLIYRPA) traverse the membrane as a helical segment.

This sequence belongs to the ATPase B chain family. F-type ATPases have 2 components, F(1) - the catalytic core - and F(0) - the membrane proton channel. F(1) has five subunits: alpha(3), beta(3), gamma(1), delta(1), epsilon(1). F(0) has three main subunits: a(1), b(2) and c(10-14). The alpha and beta chains form an alternating ring which encloses part of the gamma chain. F(1) is attached to F(0) by a central stalk formed by the gamma and epsilon chains, while a peripheral stalk is formed by the delta and b chains.

The protein resides in the cell inner membrane. Its function is as follows. F(1)F(0) ATP synthase produces ATP from ADP in the presence of a proton or sodium gradient. F-type ATPases consist of two structural domains, F(1) containing the extramembraneous catalytic core and F(0) containing the membrane proton channel, linked together by a central stalk and a peripheral stalk. During catalysis, ATP synthesis in the catalytic domain of F(1) is coupled via a rotary mechanism of the central stalk subunits to proton translocation. In terms of biological role, component of the F(0) channel, it forms part of the peripheral stalk, linking F(1) to F(0). This Rickettsia felis (strain ATCC VR-1525 / URRWXCal2) (Rickettsia azadi) protein is ATP synthase subunit b.